A 448-amino-acid chain; its full sequence is Cysteine--tRNA ligase (448 aa).

Residue Cys-27 participates in Zn(2+) binding. The 'HIGH' region signature appears at 29–39 (PTVYNYIHVGN). Zn(2+)-binding residues include Cys-210, His-235, and Glu-239. The 'KMSKS' region signature appears at 267-271 (KMSKS). Position 270 (Lys-270) interacts with ATP.

The protein belongs to the class-I aminoacyl-tRNA synthetase family. Monomer. The cofactor is Zn(2+).

It is found in the cytoplasm. The enzyme catalyses tRNA(Cys) + L-cysteine + ATP = L-cysteinyl-tRNA(Cys) + AMP + diphosphate. In Lactococcus lactis subsp. cremoris (strain MG1363), this protein is Cysteine--tRNA ligase.